Consider the following 100-residue polypeptide: MIQTITHIMIISSLIIFGIALIICLFRLIKGPTTADRVVTFDTTSAVVMSIVGVLSVLMGTVSFLDSIMLIAIISFVSSVSISRFIGGGHVFNGNNKRNL.

Transmembrane regions (helical) follow at residues 5-25 (ITHI…IICL), 38-60 (VVTF…VLMG), and 70-92 (LIAI…GHVF).

Belongs to the CPA3 antiporters (TC 2.A.63) subunit F family. May form a heterooligomeric complex that consists of seven subunits: mnhA2, mnhB2, mnhC2, mnhD2, mnhE2, mnhF2 and mnhG2.

It is found in the cell membrane. The protein is Putative antiporter subunit mnhF2 (mnhF2) of Staphylococcus aureus (strain USA300).